Here is a 207-residue protein sequence, read N- to C-terminus: Ribosomal RNA small subunit methyltransferase G (207 aa).

S-adenosyl-L-methionine contacts are provided by residues Gly73, Leu78, 124-125 (VE), and Arg139.

This sequence belongs to the methyltransferase superfamily. RNA methyltransferase RsmG family.

Its subcellular location is the cytoplasm. It catalyses the reaction guanosine(527) in 16S rRNA + S-adenosyl-L-methionine = N(7)-methylguanosine(527) in 16S rRNA + S-adenosyl-L-homocysteine. Functionally, specifically methylates the N7 position of guanine in position 527 of 16S rRNA. The protein is Ribosomal RNA small subunit methyltransferase G of Escherichia coli O17:K52:H18 (strain UMN026 / ExPEC).